The following is a 374-amino-acid chain: Putative zinc metalloprotease R01501 (374 aa).

A Zn(2+)-binding site is contributed by histidine 26. The active site involves glutamate 27. Histidine 30 contacts Zn(2+). Transmembrane regions (helical) follow at residues tryptophan 36–tryptophan 55, alanine 112–phenylalanine 134, valine 301–leucine 323, and leucine 348–asparagine 367. In terms of domain architecture, PDZ spans alanine 126 to glutamate 199.

Belongs to the peptidase M50B family. Zn(2+) is required as a cofactor.

It is found in the cell inner membrane. In Rhizobium meliloti (strain 1021) (Ensifer meliloti), this protein is Putative zinc metalloprotease R01501.